The sequence spans 568 residues: MGCSVVGNCKSVMLMSRMSWSKLALLISVAMAAAMTDSPPTLICMGILVSVVLNWIVCAVCEEASELILGVSLETTRPSPARVIGEPVFDPRYGYVAPAIYDGKSFDVILPISALSSASTRKETVEMAVENSRLQPLESSQTPKSLVALYSQDLLSGWGSRIKGPDGQEYLLTALHVWETNISHLCKDGKKVPISGCPIVASSADSDLDFVLVSVPKNAWSVLGVGVARLELLKRRTVVTVYGGLDSKTTYCATGVAELENPFRIVTKVTTTGGWSGSPLYHKDAIVGLHLGARPSAGVNRACNVAMAFRVVRKFVTVENSELYPDQSSGPARELDAETYTERLEQGIAFTEYNISGITVKTSDREWTTAEALRVARYKPLGGGKAWGDSDDEDTQETAIRPLNYQRAGSLRGSPPLANLSSTRATSGVTKESSIPTACLSDPLESRVAGLEKLCAERFTEMFELLRQSSQNSKSSLGQAADRKQKSDRSSSKPEGLKESKRPPICNWQSLTSKPSTRGPDPAPVSAESPGVVKTSSQKSKRSRTRGKSTSRQVPASPSPKSGSATSK.

Helical transmembrane passes span 10-30 (KSVM…ISVA) and 41-61 (TLIC…CAVC). Residues 129–326 (VENSRLQPLE…TVENSELYPD (198 aa)) form the Peptidase S39 domain. Catalysis depends on for protease activity residues His-176, Asp-209, and Ser-276. Thr-339 carries the post-translational modification Phosphothreonine; by host. Ser-390 is modified (phosphoserine; by host). 2 disordered regions span residues 403-435 (LNYQ…ESSI) and 469-568 (SSQN…ATSK). Polar residues-rich tracts occupy residues 419 to 435 (NLSS…ESSI) and 469 to 478 (SSQNSKSSLG). A compositionally biased stretch (basic and acidic residues) spans 481 to 502 (ADRKQKSDRSSSKPEGLKESKR). Residues 507-516 (NWQSLTSKPS) show a composition bias toward polar residues. Basic residues predominate over residues 539–549 (KSKRSRTRGKS). Polar residues predominate over residues 554 to 568 (VPASPSPKSGSATSK).

The protein localises to the host membrane. Responsible for cleavages of polyprotein P2A and replicase polyprotein P2AB. Its function is as follows. Covalently attached to the 5' extremity of the genomic and subgenomic RNAs. It may serve as a primer for the replicase. The protein is Polyprotein P2A of Cocksfoot mottle virus (isolate Dactylis glomerata/Norway/CfMV-NO/1995) (CfMV).